A 669-amino-acid polypeptide reads, in one-letter code: Potassium voltage-gated channel subfamily KQT member 1 (669 aa).

The Cytoplasmic portion of the chain corresponds to 1 to 120; it reads MDTASSPPNA…YNFLERPTGW (120 aa). Ser27 carries the phosphoserine; by PKA modification. Residues 121-142 traverse the membrane as a helical segment; sequence KCFVYHFTVFLIVLVCLIFSVL. Residues 143-153 are Extracellular-facing; sequence STIEQYAALAT. The chain crosses the membrane as a helical span at residues 154 to 176; that stretch reads GTLFWMEIVLVVFFGTEYVVRLW. The Cytoplasmic portion of the chain corresponds to 177–192; it reads SAGCRSKYVGIWGRLR. Residues 193-218 form a helical membrane-spanning segment; it reads FARKPISIIDLIVVVASMVVLCVGSK. At 219 to 226 the chain is on the extracellular side; it reads GQVFATSA. A helical; Voltage-sensor transmembrane segment spans residues 227-242; sequence IRGIRFLQILRMLHVD. Residues 238-246 form an interaction with KCNE3 region; the sequence is MLHVDRQGG. Residues 243–260 are Cytoplasmic-facing; that stretch reads RQGGTWRLLGSVVFIHRQ. Gln244 serves as a coordination point for a 1,2-diacyl-sn-glycero-3-phospho-(1D-myo-inositol-4,5-bisphosphate). The helical transmembrane segment at 261-283 threads the bilayer; sequence ELITTLYIGFLGLIFSSYFVYLA. The Extracellular segment spans residues 284 to 299; the sequence is EKDAVNESGRIEFGSY. Asn289 is a glycosylation site (N-linked (GlcNAc...) asparagine). An intramembrane region (pore-forming) is located at residues 300 to 320; the sequence is ADALWWGVVTVTTIGYGDKVP. Residues 321-322 lie on the Extracellular side of the membrane; it reads QT. The helical transmembrane segment at 323 to 348 threads the bilayer; the sequence is WVGKTIASCFSVFAISFFALPAGILG. Residues 349–669 lie on the Cytoplasmic side of the membrane; the sequence is SGFALKVQQK…VPQTGPDEGS (321 aa). The interaction with CALM stretch occupies residues 370-382; the sequence is AAASLIQTAWRCY. 2 positions are modified to phosphoserine: Ser407 and Ser409. The segment at 515–529 is interaction with CALM; calcium-dependent; that stretch reads KVIRRMQYFVAKKKF. Residues 535-572 form an interaction with KCNE1 C-terminus region; that stretch reads PYDVRDVIEQYSQGHLNLMVRIKELQRRLDQSIGKPSL. Residues 585-621 are a coiled coil; that stretch reads SNTIGARLNRVEDKVTQLDQRLVIITDMLHQLLSLQQ. The segment at 588–616 is interaction with AKAP9; the sequence is IGARLNRVEDKVTQLDQRLVIITDMLHQL. The segment at 589 to 620 is C-terminal assembly domain (tetramerization); the sequence is GARLNRVEDKVTQLDQRLVIITDMLHQLLSLQ.

Belongs to the potassium channel family. KQT (TC 1.A.1.15) subfamily. Kv7.1/KCNQ1 sub-subfamily. Tetramer. Heterotetramer with KCNE1; targets to the membrane raft. Interacts (via C-terminus) with CALM; forms a heterooctameric structure (with 4:4 KCNQ1:CALM stoichiometry) in a calcium-independent manner. Interacts with AKAP9; targets protein kinase A (PKA) catalytic and regulatory subunits and protein phosphatase 1 (PP1) to the KCNQ1-KCNE1 complex, allowing PKA-mediated phosphorylation and increase of delayed rectifier potassium channel activity. Interacts with KCNE2; form a heterooligomer complex that targets to the membrane raft and leading to currents with an apparently instantaneous activation, a rapid deactivation process and a linear current-voltage relationship and decreases the amplitude of the outward current. Interacts with AP2M1; mediates estrogen-induced internalization via clathrin-coated vesicles. Interacts with NEDD4L; promotes internalization and decreases I(Ks) currents. Interacts with USP2; counteracts the NEDD4L-specific down-regulation of I(Ks) and restore plasma membrane localization. Heterotetramer with KCNQ5; has a voltage-gated potassium channel activity. Interacts with KCNE3; produces a current with nearly instantaneous activation with a linear current-voltage relationship and alters membrane raft localization. Interacts with KCNE4; impairs KCNQ1 localization in lipid rafts and inhibits voltage-gated potassium channel activity. Interacts with KCNE5; impairs KCNQ1 localization in lipid rafts and only conducts current upon strong and continued depolarization. Interacts with SLC5A3; forms coregulatory channel-transporter complexes that modulate Na(+)-coupled myo-inositol influx through the transporter. Post-translationally, phosphorylation at Ser-27 by PKA; increases delayed rectifier potassium channel activity of the KCNQ1-KCNE1 complex through a macromolecular complex that includes PKA, PP1, and the targeting protein AKAP9. In terms of processing, ubiquitinated by NEDD4L; promotes internalization. The ubiquitinylated form is internalized through a clathrin-mediated endocytosis by interacting with AP2M1 and is recycled back to the cell membrane via RAB4A and RAB11A. Deubiquitinated by USP2; counteracts the NEDD4L-specific down-regulation of I(Ks) and restores the membrane localization.

The protein resides in the cell membrane. It localises to the cytoplasmic vesicle membrane. The protein localises to the early endosome. It is found in the membrane raft. Its subcellular location is the endoplasmic reticulum. The protein resides in the basolateral cell membrane. It localises to the apical cell membrane. The enzyme catalyses K(+)(in) = K(+)(out). With respect to regulation, PIP2 molecule is essential to activate KCNQ channels by inducing the coupling of the voltage-sensing domain (VSD) and the pore-forming domain (PD). Upon channel activation, PIP2 disrupts the VSD-calmodulin/CALM interactions, causing the release of CALM from the VSD which triggers the opening of the gate. Calcium potentiates KCNQ1 channel current through calcium-bound CALM. Calcium-bound CALM competes with PIP2 to stabilize the channel open state. In terms of biological role, pore-forming subunit of the voltage-gated potassium (Kv) channel involved in the regulation of cardiomyocyte excitability and important in normal development and functions of myocardium, inner ear, stomach and colon. Associates with KCNE beta subunits that modulates current kinetics. Induces a voltage-dependent by rapidly activating and slowly deactivating potassium-selective outward current. Also promotes a delayed voltage activated potassium current showing outward rectification characteristic. During beta-adrenergic receptor stimulation participates in cardiac repolarization by associating with KCNE1 to form the I(Ks) cardiac potassium current that increases the amplitude and slows down the activation kinetics of outward potassium current I(Ks). Muscarinic agonist oxotremorine-M strongly suppresses KCNQ1/KCNE1 current. When associated with KCNE3, forms the potassium channel that is important for cyclic AMP-stimulated intestinal secretion of chloride ions. This interaction with KCNE3 is reduced by 17beta-estradiol, resulting in the reduction of currents. During conditions of increased substrate load, maintains the driving force for proximal tubular and intestinal sodium ions absorption, gastric acid secretion, and cAMP-induced jejunal chloride ions secretion. Allows the provision of potassium ions to the luminal membrane of the secretory canaliculus in the resting state as well as during stimulated acid secretion. When associated with KCNE2, forms a heterooligomer complex leading to currents with an apparently instantaneous activation, a rapid deactivation process and a linear current-voltage relationship and decreases the amplitude of the outward current. When associated with KCNE4, inhibits voltage-gated potassium channel activity. When associated with KCNE5, this complex only conducts current upon strong and continued depolarization. Also forms a heterotetramer with KCNQ5 that has a voltage-gated potassium channel activity. Binds with phosphatidylinositol 4,5-bisphosphate. KCNQ1-KCNE2 channel associates with Na(+)-coupled myo-inositol symporter in the apical membrane of choroid plexus epithelium and regulates the myo-inositol gradient between blood and cerebrospinal fluid with an impact on neuron excitability. The polypeptide is Potassium voltage-gated channel subfamily KQT member 1 (Rattus norvegicus (Rat)).